The primary structure comprises 124 residues: Class I hydrophobin 1 (124 aa).

The signal sequence occupies residues M1–A18. Intrachain disulfides connect C35/C85, C43/C79, C44/C63, and C86/C97.

Belongs to the fungal hydrophobin family.

Its subcellular location is the secreted. It localises to the cell wall. In terms of biological role, aerial growth, conidiation, and dispersal of filamentous fungi in the environment rely upon a capability of their secreting small amphipathic proteins called hydrophobins (HPBs) with low sequence identity. Class I can self-assemble into an outermost layer of rodlet bundles on aerial cell surfaces, conferring cellular hydrophobicity that supports fungal growth, development and dispersal; whereas Class II form highly ordered films at water-air interfaces through intermolecular interactions but contribute nothing to the rodlet structure. In Botryotinia fuckeliana, hydrophobins are not involved in conferring surface hydrophobicity to conidia and aerial hyphae and their function in sclerotia and fruiting bodies remains to be investigated. The polypeptide is Class I hydrophobin 1 (Bhp1) (Botryotinia fuckeliana (strain B05.10) (Noble rot fungus)).